The following is a 235-amino-acid chain: Leucyl/phenylalanyl-tRNA--protein transferase (235 aa).

This sequence belongs to the L/F-transferase family.

It localises to the cytoplasm. The catalysed reaction is N-terminal L-lysyl-[protein] + L-leucyl-tRNA(Leu) = N-terminal L-leucyl-L-lysyl-[protein] + tRNA(Leu) + H(+). It carries out the reaction N-terminal L-arginyl-[protein] + L-leucyl-tRNA(Leu) = N-terminal L-leucyl-L-arginyl-[protein] + tRNA(Leu) + H(+). The enzyme catalyses L-phenylalanyl-tRNA(Phe) + an N-terminal L-alpha-aminoacyl-[protein] = an N-terminal L-phenylalanyl-L-alpha-aminoacyl-[protein] + tRNA(Phe). Its function is as follows. Functions in the N-end rule pathway of protein degradation where it conjugates Leu, Phe and, less efficiently, Met from aminoacyl-tRNAs to the N-termini of proteins containing an N-terminal arginine or lysine. This is Leucyl/phenylalanyl-tRNA--protein transferase from Shewanella frigidimarina (strain NCIMB 400).